We begin with the raw amino-acid sequence, 118 residues long: Aspartate 1-decarboxylase (118 aa).

The active-site Schiff-base intermediate with substrate; via pyruvic acid is the serine 25. Pyruvic acid (Ser) is present on serine 25. Threonine 57 lines the substrate pocket. The active-site Proton donor is the tyrosine 58. Residue 73 to 75 participates in substrate binding; that stretch reads GAA.

The protein belongs to the PanD family. Heterooctamer of four alpha and four beta subunits. Requires pyruvate as cofactor. Post-translationally, is synthesized initially as an inactive proenzyme, which is activated by self-cleavage at a specific serine bond to produce a beta-subunit with a hydroxyl group at its C-terminus and an alpha-subunit with a pyruvoyl group at its N-terminus.

It localises to the cytoplasm. It carries out the reaction L-aspartate + H(+) = beta-alanine + CO2. It functions in the pathway cofactor biosynthesis; (R)-pantothenate biosynthesis; beta-alanine from L-aspartate: step 1/1. In terms of biological role, catalyzes the pyruvoyl-dependent decarboxylation of aspartate to produce beta-alanine. The sequence is that of Aspartate 1-decarboxylase from Phenylobacterium zucineum (strain HLK1).